A 390-amino-acid polypeptide reads, in one-letter code: Cell division protein FtsZ (390 aa).

GTP contacts are provided by residues 21-25 (GGGNN), 108-110 (GTG), Glu139, Arg143, and Asp187. The disordered stretch occupies residues 315 to 390 (FDDKPTSHGR…EERRSRRTRR (76 aa)). A compositionally biased stretch (polar residues) spans 326-360 (SGSTGFGTSVNTSSNATSKDESFTSNSSNAQATDS). A compositionally biased stretch (basic and acidic residues) spans 361 to 384 (VSERTHTTKEDDIPSFIRNREERR).

The protein belongs to the FtsZ family. As to quaternary structure, homodimer. Polymerizes to form a dynamic ring structure in a strictly GTP-dependent manner. Interacts directly with several other division proteins.

It localises to the cytoplasm. Functionally, essential cell division protein that forms a contractile ring structure (Z ring) at the future cell division site. The regulation of the ring assembly controls the timing and the location of cell division. One of the functions of the FtsZ ring is to recruit other cell division proteins to the septum to produce a new cell wall between the dividing cells. Binds GTP and shows GTPase activity. This is Cell division protein FtsZ from Staphylococcus aureus (strain NCTC 8325 / PS 47).